The sequence spans 359 residues: NF-kappa-B inhibitor beta (359 aa).

Residues Ser-19 and Ser-23 each carry the phosphoserine; by RPS6KA1 modification. ANK repeat units lie at residues 57-86 (DGDT…GTEY), 93-122 (LGQT…GVLV), 126-155 (GGHT…SHPR), 206-235 (DGHT…DLNK), 240-269 (CGRT…DPTA), and 273-302 (GGRT…PEPE). Residues 153–192 (HPRDASDTYLTQSQDHTPDTSHAPVATDPQPNPGNEEELR) form a disordered region. Basic and acidic residues predominate over residues 298-308 (APEPEDKDDKL). Residues 298–359 (APEPEDKDDK…KPLPDDPNPA (62 aa)) are disordered. Phosphoserine is present on Ser-318. The segment covering 318-331 (SDSDNRDEGDEYDD) has biased composition (acidic residues). Over residues 342-359 (QPPPSPAAKPLPDDPNPA) the composition is skewed to pro residues.

It belongs to the NF-kappa-B inhibitor family. Interacts with THRB (via ligand-binding domain). Interacts with RELA and REL. Interacts with COMMD1. Interacts with inhibitor kappa B-interacting Ras-like NKIRAS1 and NKIRAS2. Phosphorylated by RPS6KA1; followed by degradation. Interaction with NKIRAS1 and NKIRAS2 probably prevents phosphorylation.

Its subcellular location is the cytoplasm. The protein resides in the nucleus. Its function is as follows. Inhibits NF-kappa-B by complexing with and trapping it in the cytoplasm. However, the unphosphorylated form resynthesized after cell stimulation is able to bind NF-kappa-B allowing its transport to the nucleus and protecting it to further NFKBIA-dependent inactivation. Association with inhibitor kappa B-interacting NKIRAS1 and NKIRAS2 prevent its phosphorylation rendering it more resistant to degradation, explaining its slower degradation. This chain is NF-kappa-B inhibitor beta (Nfkbib), found in Rattus norvegicus (Rat).